Here is a 263-residue protein sequence, read N- to C-terminus: NH(3)-dependent NAD(+) synthetase (263 aa).

An ATP-binding site is contributed by 29 to 36; it reads GISGGIDS. Asp-35 is a Mg(2+) binding site. Position 114 (Arg-114) interacts with deamido-NAD(+). Thr-134 contacts ATP. A Mg(2+)-binding site is contributed by Glu-139. Lys-147 and Asp-154 together coordinate deamido-NAD(+). Lys-163 and Ser-185 together coordinate ATP. Residue 244–245 coordinates deamido-NAD(+); that stretch reads HK.

Belongs to the NAD synthetase family. Homodimer.

It catalyses the reaction deamido-NAD(+) + NH4(+) + ATP = AMP + diphosphate + NAD(+) + H(+). It functions in the pathway cofactor biosynthesis; NAD(+) biosynthesis; NAD(+) from deamido-NAD(+) (ammonia route): step 1/1. Catalyzes the ATP-dependent amidation of deamido-NAD to form NAD. Uses ammonia as a nitrogen source. This Methanococcoides burtonii (strain DSM 6242 / NBRC 107633 / OCM 468 / ACE-M) protein is NH(3)-dependent NAD(+) synthetase.